The chain runs to 339 residues: Paired box protein Pax-9 (339 aa).

Residues 2–128 constitute a DNA-binding region (paired); that stretch reads AFGEVNQLGG…SSISRILRNK (127 aa). The PAI subdomain stretch occupies residues 5 to 61; it reads EVNQLGGVFVNGRPLPNAIRLRIVELAQLGIRPCDISRQLRVSHGCVSKILARYNET. Residues 80-128 form an RED subdomain region; that stretch reads TVVKHIRTYKQRDPGIFAWEIRDRLLADGVCDKYNVPSVSSISRILRNK.

The protein localises to the nucleus. This Gallus gallus (Chicken) protein is Paired box protein Pax-9 (PAX9).